We begin with the raw amino-acid sequence, 165 residues long: Acireductone dioxygenase (165 aa).

Residues H90, H92, E96, and H134 each contribute to the Fe(2+) site. Ni(2+) is bound by residues H90, H92, E96, and H134.

The protein belongs to the acireductone dioxygenase (ARD) family. As to quaternary structure, monomer. It depends on Fe(2+) as a cofactor. Requires Ni(2+) as cofactor.

It catalyses the reaction 1,2-dihydroxy-5-(methylsulfanyl)pent-1-en-3-one + O2 = 3-(methylsulfanyl)propanoate + CO + formate + 2 H(+). The enzyme catalyses 1,2-dihydroxy-5-(methylsulfanyl)pent-1-en-3-one + O2 = 4-methylsulfanyl-2-oxobutanoate + formate + 2 H(+). Its pathway is amino-acid biosynthesis; L-methionine biosynthesis via salvage pathway; L-methionine from S-methyl-5-thio-alpha-D-ribose 1-phosphate: step 5/6. In terms of biological role, catalyzes 2 different reactions between oxygen and the acireductone 1,2-dihydroxy-3-keto-5-methylthiopentene (DHK-MTPene) depending upon the metal bound in the active site. Fe-containing acireductone dioxygenase (Fe-ARD) produces formate and 2-keto-4-methylthiobutyrate (KMTB), the alpha-ketoacid precursor of methionine in the methionine recycle pathway. Ni-containing acireductone dioxygenase (Ni-ARD) produces methylthiopropionate, carbon monoxide and formate, and does not lie on the methionine recycle pathway. The protein is Acireductone dioxygenase of Rhodopseudomonas palustris (strain TIE-1).